An 87-amino-acid polypeptide reads, in one-letter code: Small ribosomal subunit protein uS15c (87 aa).

Belongs to the universal ribosomal protein uS15 family. In terms of assembly, part of the 30S ribosomal subunit.

Its subcellular location is the plastid. It localises to the chloroplast. This chain is Small ribosomal subunit protein uS15c (rps15), found in Amborella trichopoda.